Here is a 1077-residue protein sequence, read N- to C-terminus: Histone deacetylase 4 (1077 aa).

A coiled-coil region spans residues 66 to 169 (REQQLQQELL…GKESAVASTE (104 aa)). The interaction with MEF2A stretch occupies residues 117-312 (MLAMKHQQEL…NSSSGNVSTE (196 aa)). The segment covering 132–162 (KLERHRQEQELEKQHREQKLQQLKNKEKGKE) has biased composition (basic and acidic residues). 3 disordered regions span residues 132 to 167 (KLER…AVAS), 204 to 225 (KTQH…ASYN), and 239 to 327 (PLRK…AETS). Polar residues predominate over residues 205-224 (TQHSSLDQSSPPQSGVSASY). Phosphoserine is present on Ser-209. Ser-245 is subject to Phosphoserine; by CaMK4 and SIK1. Basic and acidic residues predominate over residues 258–273 (KVAERRSSPLLRRKDG). The span at 289–310 (SACSSAPGSGPSSPNSSSGNVS) shows a compositional bias: low complexity. The PxLPxI/L motif; mediates interaction with ANKRA2 and 14-3-3 proteins signature appears at 348-353 (PSLPNI). Phosphoserine is present on Ser-349. Ser-466 is subject to Phosphoserine; by CaMK4 and SIK1. Disordered regions lie at residues 508–530 (SKPS…ELRE), 542–582 (RLPG…RPAT), and 623–646 (RPLS…EPPT). A compositionally biased stretch (basic and acidic residues) spans 515–530 (RQPESHPEETEEELRE). Lys-557 participates in a covalent cross-link: Glycyl lysine isopeptide (Lys-Gly) (interchain with G-Cter in SUMO). 3 positions are modified to phosphoserine: Ser-563, Ser-630, and Ser-631. Polar residues predominate over residues 627–639 (RAQSSPASATFPM). The segment at 653 to 1077 (GLVYDTLMLK…EEPMEEEPPL (425 aa)) is histone deacetylase. Cys-665, Cys-667, His-673, and Cys-744 together coordinate Zn(2+). His-796 is an active-site residue. Positions 1044-1077 (EEAETVTAMASLSVGVKPAEKRSEEEPMEEEPPL) match the Nuclear export signal motif. The segment at 1052–1077 (MASLSVGVKPAEKRSEEEPMEEEPPL) is disordered.

Belongs to the histone deacetylase family. HD type 2 subfamily. As to quaternary structure, homodimer. Homodimerization via its N-terminal domain. Interacts with HDAC7. Interacts with MEF2A, MEF2C, MEF2D, MORC2 and NR2C1. Interacts with a 14-3-3 chaperone proteins in a phosphorylation dependent manner. Interacts with 14-3-3 protein YWHAB. Interacts with KDM5B and AHRR. Interacts with BTBD14B. Interacts with MYOCD. Interacts (via PxLPxI/L motif) with ANKRA2 (via ankyrin repeats). Interacts with CUL7 (as part of the 3M complex); negatively regulated by ANKRA2. Interacts with EP300 in the presence of TFAP2C. Interacts with HSPA1A and HSPA1B leading to their deacetylation at 'Lys-77'. Interacts with ZBTB7B; the interaction allows the recruitment of HDAC4 on CD8 loci for deacetylation and possible inhibition of CD8 genes expression. Interacts with DHX36. Interacts with SIK3; this interaction leads to HDAC4 retention in the cytoplasm. Phosphorylated by CaMK4 at Ser-245, Ser-466 and Ser-630. Phosphorylation at other residues by CaMK2D is required for the interaction with 14-3-3. Phosphorylation at Ser-349, within the PxLPxI/L motif, impairs the binding of ANKRA2 but generates a high-affinity docking site for 14-3-3. In terms of processing, sumoylation on Lys-557 is promoted by the E3 SUMO-protein ligase RANBP2, and prevented by phosphorylation by CaMK4.

It is found in the nucleus. The protein resides in the cytoplasm. The catalysed reaction is N(6)-acetyl-L-lysyl-[histone] + H2O = L-lysyl-[histone] + acetate. Its function is as follows. Responsible for the deacetylation of lysine residues on the N-terminal part of the core histones (H2A, H2B, H3 and H4). Histone deacetylation gives a tag for epigenetic repression and plays an important role in transcriptional regulation, cell cycle progression and developmental events. Histone deacetylases act via the formation of large multiprotein complexes. Involved in muscle maturation via its interaction with the myocyte enhancer factors such as MEF2A, MEF2C and MEF2D. Deacetylates HSPA1A and HSPA1B at 'Lys-77' leading to their preferential binding to co-chaperone STUB1. This is Histone deacetylase 4 (Hdac4) from Rattus norvegicus (Rat).